Consider the following 322-residue polypeptide: Chemokine XC receptor 1 (322 aa).

Residues 1–27 (MESSTAFYDYHDKLSLLCENNVIFFST) are Extracellular-facing. A helical membrane pass occupies residues 28–55 (ISTIVLYSLVFLLSLVGNSLVLWVLVKY). Topologically, residues 56-65 (ENLESLTNIF) are cytoplasmic. The chain crosses the membrane as a helical span at residues 66–85 (ILNLCLSDLMFSCLLPVLIS). At 86–98 (AQWSWFLGDFFCK) the chain is on the extracellular side. A disulfide bridge links cysteine 97 with cysteine 170. A helical transmembrane segment spans residues 99–120 (FFNMIFGISLYSSIFFLTIMTI). The Cytoplasmic segment spans residues 121–137 (HRYLSVVSPISTLGIHT). Residues 138–162 (LRCRVLVTSCVWAASILFSIPDAVF) traverse the membrane as a helical segment. Over 163-185 (HKVISLNCKYSEHHGFLASVYQH) the chain is Extracellular. The chain crosses the membrane as a helical span at residues 186–204 (NIFFLLSMGIILFCYVQIL). The Cytoplasmic portion of the chain corresponds to 205 to 220 (RTLFRTRSRQRHRTVR). The chain crosses the membrane as a helical span at residues 221-243 (LIFTVVVAYFLSWAPYNLTLFLK). At 244–259 (TGIIQQSCESLQQLDI) the chain is on the extracellular side. A helical transmembrane segment spans residues 260-283 (AMIICRHLAFSHCCFNPVLYVFVG). The Cytoplasmic portion of the chain corresponds to 284 to 322 (IKFRRHLKHLFQQVWLCRKTSSTVPCSPGTFTYEGPSFY).

This sequence belongs to the G-protein coupled receptor 1 family. As to expression, expressed by dendritic cells from the thymus, slpeen, subcutaneous lymph nodes and mesenteric lymph nodes.

It is found in the cell membrane. Its function is as follows. Receptor for chemokines SCYC1 and SCYC2. Subsequently transduces a signal by increasing the intracellular calcium ions level. Receptor for XCL1/Lymphotactin. The chain is Chemokine XC receptor 1 (Xcr1) from Mus musculus (Mouse).